A 329-amino-acid polypeptide reads, in one-letter code: Lipoyl synthase (329 aa).

The disordered stretch occupies residues 1–23 (MTDLTATPAPAEPAASAYDPTAK). The [4Fe-4S] cluster site is built by Cys-76, Cys-81, Cys-87, Cys-102, Cys-106, Cys-109, and Ser-316. A Radical SAM core domain is found at 87–305 (CFGKGTATFM…EEEAYKMGFT (219 aa)).

It belongs to the radical SAM superfamily. Lipoyl synthase family. Requires [4Fe-4S] cluster as cofactor.

It localises to the cytoplasm. The enzyme catalyses [[Fe-S] cluster scaffold protein carrying a second [4Fe-4S](2+) cluster] + N(6)-octanoyl-L-lysyl-[protein] + 2 oxidized [2Fe-2S]-[ferredoxin] + 2 S-adenosyl-L-methionine + 4 H(+) = [[Fe-S] cluster scaffold protein] + N(6)-[(R)-dihydrolipoyl]-L-lysyl-[protein] + 4 Fe(3+) + 2 hydrogen sulfide + 2 5'-deoxyadenosine + 2 L-methionine + 2 reduced [2Fe-2S]-[ferredoxin]. It participates in protein modification; protein lipoylation via endogenous pathway; protein N(6)-(lipoyl)lysine from octanoyl-[acyl-carrier-protein]: step 2/2. In terms of biological role, catalyzes the radical-mediated insertion of two sulfur atoms into the C-6 and C-8 positions of the octanoyl moiety bound to the lipoyl domains of lipoate-dependent enzymes, thereby converting the octanoylated domains into lipoylated derivatives. The protein is Lipoyl synthase of Burkholderia pseudomallei (strain 1106a).